The primary structure comprises 121 residues: ORF8 protein (121 aa).

Positions 1–15 (MKFLVFLGIITTVAA) are cleaved as a signal peptide. The SARS ORF8 Ig-like domain occupies 19-121 (ECSLQSCTQH…HDVRVVLDFI (103 aa)). Disulfide bonds link C25–C90, C37–C102, and C61–C83. N-linked (GlcNAc...) (complex) asparagine; by host glycosylation is present at N78.

As to quaternary structure, homodimer. Interacts with host IL17RA. Interacts with host IL17RC. Interacts with host MHC-I. Glycosylated by the host when secreted via the conventional pathway. The glycosylated form cannot bind IL17A and would not participate in the cytokine storm.

It localises to the secreted. In terms of biological role, plays a role in modulating the host immune response. May act as a secreted virokine by mimicking interleukin-17A (IL17A), and thereby binding to the IL17RA receptor, leading to activation of the IL17 pathway and increased secretion of pro-inflammatory factors. Contributes to the cytokine storm during SARS-CoV-2 infection when secreted by unconventional pathway. May act by down-regulating major histocompability complex class I (MHC-I) at cell surface. May inhibit expression of some members of the IFN-stimulated gene (ISG) family including hosts IGF2BP1/ZBP1, MX1 and MX2, and DHX58. The sequence is that of ORF8 protein from Severe acute respiratory syndrome coronavirus 2 (2019-nCoV).